Reading from the N-terminus, the 346-residue chain is Elongation factor 1-alpha (346 aa).

In terms of domain architecture, tr-type G spans 1–127 (GTSQADVALL…DNVEPPKRPS (127 aa)). 49–52 (NKMD) contributes to the GTP binding site.

This sequence belongs to the TRAFAC class translation factor GTPase superfamily. Classic translation factor GTPase family. EF-Tu/EF-1A subfamily.

It is found in the cytoplasm. This protein promotes the GTP-dependent binding of aminoacyl-tRNA to the A-site of ribosomes during protein biosynthesis. In Eimeria bovis, this protein is Elongation factor 1-alpha.